Reading from the N-terminus, the 457-residue chain is Transmembrane protease serine 5 (457 aa).

Residues 1–21 form a disordered region; that stretch reads MSLMLDDQPPMEAQYAEEGPG. Topologically, residues 1–49 are cytoplasmic; sequence MSLMLDDQPPMEAQYAEEGPGPGIFRAEPGDQQHPISQAVCWRSMRRGC. Residues 50-70 form a helical; Signal-anchor for type II membrane protein membrane-spanning segment; it reads AVLGALGLLAGAGVGSWLLVL. The Extracellular portion of the chain corresponds to 71–457; it reads YLCPAASQPI…IHDTAQDSLL (387 aa). Positions 112–207 constitute an SRCR domain; the sequence is FRINSEDFLL…SGQVVSLRCS (96 aa). Intrachain disulfides connect cysteine 135–cysteine 196, cysteine 148–cysteine 206, cysteine 209–cysteine 328, cysteine 243–cysteine 259, cysteine 342–cysteine 411, cysteine 374–cysteine 390, and cysteine 401–cysteine 429. N-linked (GlcNAc...) asparagine glycans are attached at residues asparagine 163, asparagine 170, and asparagine 195. One can recognise a Peptidase S1 domain in the interval 218 to 453; it reads IVGGQSVAPG…FLDWIHDTAQ (236 aa). Residues histidine 258 and aspartate 308 each act as charge relay system in the active site. 2 N-linked (GlcNAc...) asparagine glycosylation sites follow: asparagine 319 and asparagine 375. Serine 405 serves as the catalytic Charge relay system.

This sequence belongs to the peptidase S1 family. As to expression, brain-specific. Predominantly expressed in neurons, in their axons, and at the synapses of motoneurons in the spinal cord.

It localises to the cell membrane. Functionally, may play a role in hearing. In Homo sapiens (Human), this protein is Transmembrane protease serine 5 (TMPRSS5).